Consider the following 278-residue polypeptide: Formamidopyrimidine-DNA glycosylase (278 aa).

Catalysis depends on proline 2, which acts as the Schiff-base intermediate with DNA. Residue glutamate 3 is the Proton donor of the active site. Catalysis depends on lysine 60, which acts as the Proton donor; for beta-elimination activity. Residues histidine 95 and arginine 114 each coordinate DNA. The segment at 244 to 278 (WVYRRGGEPCRRCGTIIRRDKLSGRSTHWCPTCQG) adopts an FPG-type zinc-finger fold. Residue arginine 268 is the Proton donor; for delta-elimination activity of the active site.

The protein belongs to the FPG family. Monomer. It depends on Zn(2+) as a cofactor.

The catalysed reaction is Hydrolysis of DNA containing ring-opened 7-methylguanine residues, releasing 2,6-diamino-4-hydroxy-5-(N-methyl)formamidopyrimidine.. The enzyme catalyses 2'-deoxyribonucleotide-(2'-deoxyribose 5'-phosphate)-2'-deoxyribonucleotide-DNA = a 3'-end 2'-deoxyribonucleotide-(2,3-dehydro-2,3-deoxyribose 5'-phosphate)-DNA + a 5'-end 5'-phospho-2'-deoxyribonucleoside-DNA + H(+). Its function is as follows. Involved in base excision repair of DNA damaged by oxidation or by mutagenic agents. Acts as a DNA glycosylase that recognizes and removes damaged bases. Has a preference for oxidized purines, such as 7,8-dihydro-8-oxoguanine (8-oxoG). Has AP (apurinic/apyrimidinic) lyase activity and introduces nicks in the DNA strand. Cleaves the DNA backbone by beta-delta elimination to generate a single-strand break at the site of the removed base with both 3'- and 5'-phosphates. The sequence is that of Formamidopyrimidine-DNA glycosylase from Parasynechococcus marenigrum (strain WH8102).